The primary structure comprises 198 residues: Small ribosomal subunit protein uS7 (198 aa).

This sequence belongs to the universal ribosomal protein uS7 family. In terms of assembly, part of the 30S ribosomal subunit.

One of the primary rRNA binding proteins, it binds directly to 16S rRNA where it nucleates assembly of the head domain of the 30S subunit. Is located at the subunit interface close to the decoding center. This Nanoarchaeum equitans (strain Kin4-M) protein is Small ribosomal subunit protein uS7.